Consider the following 559-residue polypeptide: uncharacterized protein (559 aa).

11 consecutive transmembrane segments (helical) span residues 103 to 123, 139 to 159, 192 to 212, 223 to 243, 263 to 283, 302 to 322, 348 to 368, 387 to 407, 413 to 434, 466 to 486, and 501 to 521; these read LAAL…NGLF, FGYY…LFYY, AGIT…SFPF, FFLI…IFLL, WSWV…TLAV, MLIL…SGVA, AAAF…NISD, IRRA…PWKI, AFLA…IFVA, ALIA…MSIN, and IGYF…NLVF.

It belongs to the purine-cytosine permease (2.A.39) family.

It is found in the golgi apparatus membrane. This is an uncharacterized protein from Schizosaccharomyces pombe (strain 972 / ATCC 24843) (Fission yeast).